The sequence spans 356 residues: Neutral protease 2 homolog MEP5 (356 aa).

An N-terminal signal peptide occupies residues 1 to 19; it reads MRVSSSLIALAALAVQALA. Positions 20–179 are excised as a propeptide; it reads LPVNELAERD…ASAIPELDKR (160 aa). Intrachain disulfides connect Cys-187–Cys-259 and Cys-266–Cys-284. His-308 is a Zn(2+) binding site. The active site involves Glu-309. Zn(2+) contacts are provided by His-312 and Asp-323.

Belongs to the peptidase M35 family. Zn(2+) serves as cofactor.

The protein localises to the secreted. It catalyses the reaction Preferential cleavage of bonds with hydrophobic residues in P1'. Also 3-Asn-|-Gln-4 and 8-Gly-|-Ser-9 bonds in insulin B chain.. Functionally, secreted metalloproteinase that allows assimilation of proteinaceous substrates. Shows high activities on basic nuclear substrates such as histone and protamine. May be involved in virulence. The polypeptide is Neutral protease 2 homolog MEP5 (MEP5) (Coccidioides posadasii (strain C735) (Valley fever fungus)).